A 229-amino-acid chain; its full sequence is Potassium/proton antiporter CemA (229 aa).

The next 3 membrane-spanning stretches (helical) occupy residues 7 to 27, 106 to 126, and 189 to 209; these read FLPL…SLSF, MILH…YSIL, and IISG…KYWI.

This sequence belongs to the CemA family.

It is found in the plastid. The protein resides in the chloroplast inner membrane. The catalysed reaction is K(+)(in) + H(+)(out) = K(+)(out) + H(+)(in). Its function is as follows. Contributes to K(+)/H(+) antiport activity by supporting proton efflux to control proton extrusion and homeostasis in chloroplasts in a light-dependent manner to modulate photosynthesis. Prevents excessive induction of non-photochemical quenching (NPQ) under continuous-light conditions. Indirectly promotes efficient inorganic carbon uptake into chloroplasts. The chain is Potassium/proton antiporter CemA from Eucalyptus globulus subsp. globulus (Tasmanian blue gum).